We begin with the raw amino-acid sequence, 378 residues long: Putative F-box protein At3g24580 (378 aa).

An F-box domain is found at methionine 1–histidine 47.

The chain is Putative F-box protein At3g24580 from Arabidopsis thaliana (Mouse-ear cress).